Consider the following 216-residue polypeptide: MRIAPYGTGSVVKTAIFCFVIFITALFLPQPGGVILATAALGFLLFTLYFYRDPERKIPDGKGLVIAPADGKIVLKQTLDHPVTGPGSTLVSIFMSPFNVHVNRIPVDGLVRDLRYHEGKFLMAFDHRSMTDNERMEITLDTAAGPLWFCQVSGFVARRIVCDLEAGQEVASGKRFGMIKLGSRVDIVLPSSIQIKVKEGMKTTAGETILGQTGGF.

Residue Ser-183 is the Schiff-base intermediate with substrate; via pyruvic acid of the active site. At Ser-183 the chain carries Pyruvic acid (Ser); by autocatalysis.

This sequence belongs to the phosphatidylserine decarboxylase family. PSD-A subfamily. As to quaternary structure, heterodimer of a large membrane-associated beta subunit and a small pyruvoyl-containing alpha subunit. The cofactor is pyruvate. In terms of processing, is synthesized initially as an inactive proenzyme. Formation of the active enzyme involves a self-maturation process in which the active site pyruvoyl group is generated from an internal serine residue via an autocatalytic post-translational modification. Two non-identical subunits are generated from the proenzyme in this reaction, and the pyruvate is formed at the N-terminus of the alpha chain, which is derived from the carboxyl end of the proenzyme. The post-translation cleavage follows an unusual pathway, termed non-hydrolytic serinolysis, in which the side chain hydroxyl group of the serine supplies its oxygen atom to form the C-terminus of the beta chain, while the remainder of the serine residue undergoes an oxidative deamination to produce ammonia and the pyruvoyl prosthetic group on the alpha chain.

It is found in the cell membrane. It catalyses the reaction a 1,2-diacyl-sn-glycero-3-phospho-L-serine + H(+) = a 1,2-diacyl-sn-glycero-3-phosphoethanolamine + CO2. It functions in the pathway phospholipid metabolism; phosphatidylethanolamine biosynthesis; phosphatidylethanolamine from CDP-diacylglycerol: step 2/2. Catalyzes the formation of phosphatidylethanolamine (PtdEtn) from phosphatidylserine (PtdSer). This chain is Phosphatidylserine decarboxylase proenzyme, found in Chlorobaculum tepidum (strain ATCC 49652 / DSM 12025 / NBRC 103806 / TLS) (Chlorobium tepidum).